The primary structure comprises 103 residues: Large ribosomal subunit protein bL21 (103 aa).

Belongs to the bacterial ribosomal protein bL21 family. As to quaternary structure, part of the 50S ribosomal subunit. Contacts protein L20.

Its function is as follows. This protein binds to 23S rRNA in the presence of protein L20. This is Large ribosomal subunit protein bL21 from Clostridium perfringens (strain ATCC 13124 / DSM 756 / JCM 1290 / NCIMB 6125 / NCTC 8237 / Type A).